The following is a 196-amino-acid chain: Orotate phosphoribosyltransferase (196 aa).

Position 117–125 (117–125) interacts with 5-phospho-alpha-D-ribose 1-diphosphate; the sequence is EDIVTTGLS. The orotate site is built by T121 and R149.

It belongs to the purine/pyrimidine phosphoribosyltransferase family. PyrE subfamily. As to quaternary structure, homodimer. Mg(2+) serves as cofactor.

The catalysed reaction is orotidine 5'-phosphate + diphosphate = orotate + 5-phospho-alpha-D-ribose 1-diphosphate. Its pathway is pyrimidine metabolism; UMP biosynthesis via de novo pathway; UMP from orotate: step 1/2. Its function is as follows. Catalyzes the transfer of a ribosyl phosphate group from 5-phosphoribose 1-diphosphate to orotate, leading to the formation of orotidine monophosphate (OMP). In Methylorubrum extorquens (strain PA1) (Methylobacterium extorquens), this protein is Orotate phosphoribosyltransferase.